The chain runs to 77 residues: UPF0349 protein lmo2392 (77 aa).

This sequence belongs to the UPF0349 family.

This is UPF0349 protein lmo2392 from Listeria monocytogenes serovar 1/2a (strain ATCC BAA-679 / EGD-e).